A 210-amino-acid chain; its full sequence is Guanylate kinase (210 aa).

The 181-residue stretch at 8–188 folds into the Guanylate kinase-like domain; that stretch reads GNLFIIAAPS…SLASLEHIVL (181 aa). 15–22 lines the ATP pocket; that stretch reads APSGAGKS.

This sequence belongs to the guanylate kinase family.

The protein resides in the cytoplasm. The catalysed reaction is GMP + ATP = GDP + ADP. In terms of biological role, essential for recycling GMP and indirectly, cGMP. In Idiomarina loihiensis (strain ATCC BAA-735 / DSM 15497 / L2-TR), this protein is Guanylate kinase.